Here is a 122-residue protein sequence, read N- to C-terminus: Large ribosomal subunit protein uL14 (122 aa).

This sequence belongs to the universal ribosomal protein uL14 family. In terms of assembly, part of the 50S ribosomal subunit. Forms a cluster with proteins L3 and L19. In the 70S ribosome, L14 and L19 interact and together make contacts with the 16S rRNA in bridges B5 and B8.

Functionally, binds to 23S rRNA. Forms part of two intersubunit bridges in the 70S ribosome. The polypeptide is Large ribosomal subunit protein uL14 (Xanthomonas axonopodis pv. citri (strain 306)).